A 423-amino-acid polypeptide reads, in one-letter code: Imidazolonepropionase (423 aa).

Residues H87 and H89 each coordinate Fe(3+). Residues H87 and H89 each contribute to the Zn(2+) site. 3 residues coordinate 4-imidazolone-5-propanoate: R96, Y159, and H192. Y159 lines the N-formimidoyl-L-glutamate pocket. H257 lines the Fe(3+) pocket. Residue H257 coordinates Zn(2+). Residue E260 coordinates 4-imidazolone-5-propanoate. Fe(3+) is bound at residue D331. Zn(2+) is bound at residue D331. N-formimidoyl-L-glutamate-binding residues include N333 and G335. S336 is a binding site for 4-imidazolone-5-propanoate.

The protein belongs to the metallo-dependent hydrolases superfamily. HutI family. Zn(2+) is required as a cofactor. It depends on Fe(3+) as a cofactor.

Its subcellular location is the cytoplasm. It carries out the reaction 4-imidazolone-5-propanoate + H2O = N-formimidoyl-L-glutamate. It participates in amino-acid degradation; L-histidine degradation into L-glutamate; N-formimidoyl-L-glutamate from L-histidine: step 3/3. Catalyzes the hydrolytic cleavage of the carbon-nitrogen bond in imidazolone-5-propanoate to yield N-formimidoyl-L-glutamate. It is the third step in the universal histidine degradation pathway. The chain is Imidazolonepropionase from Porphyromonas gingivalis (strain ATCC BAA-308 / W83).